A 298-amino-acid chain; its full sequence is Protein ILRUN (298 aa).

Residues 199-277 are disordered; it reads NTQPHRKVEG…SVNLSPSSHA (79 aa). A phosphoserine mark is found at S215 and S222. Low complexity predominate over residues 242–255; sequence TWAPAPDTWAPAPD. Over residues 262–277 the composition is skewed to polar residues; the sequence is NRLSQNSVNLSPSSHA. At S272 the chain carries Phosphoserine.

In terms of assembly, interacts with IRF3; the interaction inhibits IRF3 binding to its DNA consensus sequence. In terms of tissue distribution, expressed in lung (at protein level).

The protein resides in the cytoplasm. It is found in the nucleus. In terms of biological role, negative regulator of innate antiviral response. Blocks IRF3-dependent cytokine production such as IFNA, IFNB and TNF. Interacts with IRF3 and inhibits IRF3 recruitment to type I IFN promoter sequences while also reducing nuclear levels of the coactivators EP300 and CREBBP. The chain is Protein ILRUN from Homo sapiens (Human).